The following is a 77-amino-acid chain: Conotoxin ArMKLT2-022 (77 aa).

The signal sequence occupies residues 1–22 (MKLTCVLIVAVLFLTACQLIAA). Positions 23 to 46 (DDSRDLKRFSRRKMRDGMLNTKNT) are excised as a propeptide. Gln49 carries the pyrrolidone carboxylic acid modification. 3 cysteine pairs are disulfide-bonded: Cys50-Cys65, Cys57-Cys68, and Cys64-Cys73.

It belongs to the conotoxin O1 superfamily. As to expression, expressed by the venom duct.

It localises to the secreted. The polypeptide is Conotoxin ArMKLT2-022 (Conus arenatus (Sand-dusted cone)).